We begin with the raw amino-acid sequence, 151 residues long: UPF0208 membrane protein NT01EI_2692 (151 aa).

Helical transmembrane passes span 46–65 and 69–91; these read FAIR…QIAL and LGPA…WWLG.

Belongs to the UPF0208 family.

It is found in the cell inner membrane. The sequence is that of UPF0208 membrane protein NT01EI_2692 from Edwardsiella ictaluri (strain 93-146).